The primary structure comprises 867 residues: Alanine--tRNA ligase (867 aa).

Zn(2+) is bound by residues His-558, His-562, Cys-660, and His-664.

Belongs to the class-II aminoacyl-tRNA synthetase family. Zn(2+) is required as a cofactor.

It is found in the cytoplasm. The catalysed reaction is tRNA(Ala) + L-alanine + ATP = L-alanyl-tRNA(Ala) + AMP + diphosphate. Catalyzes the attachment of alanine to tRNA(Ala) in a two-step reaction: alanine is first activated by ATP to form Ala-AMP and then transferred to the acceptor end of tRNA(Ala). Also edits incorrectly charged Ser-tRNA(Ala) and Gly-tRNA(Ala) via its editing domain. This is Alanine--tRNA ligase from Fervidobacterium nodosum (strain ATCC 35602 / DSM 5306 / Rt17-B1).